The sequence spans 555 residues: Potassium-transporting ATPase potassium-binding subunit (555 aa).

A run of 10 helical transmembrane segments spans residues 2–22 (IWVA…PTGI), 60–80 (QYAL…YFIF), 130–150 (IGIT…VMAF), 173–193 (VFLP…VPQT), 246–266 (MSNI…PFTY), 278–298 (ILFV…TTSE), 374–394 (AGFV…GLMV), 412–432 (LIAV…ALAL), 483–503 (LVMF…AASL), and 525–545 (GIFI…MLVL).

The protein belongs to the KdpA family. In terms of assembly, the system is composed of three essential subunits: KdpA, KdpB and KdpC.

The protein localises to the cell membrane. Part of the high-affinity ATP-driven potassium transport (or Kdp) system, which catalyzes the hydrolysis of ATP coupled with the electrogenic transport of potassium into the cytoplasm. This subunit binds the extracellular potassium ions and delivers the ions to the membrane domain of KdpB through an intramembrane tunnel. This is Potassium-transporting ATPase potassium-binding subunit from Bacillus mycoides (strain KBAB4) (Bacillus weihenstephanensis).